The following is a 150-amino-acid chain: Ribonuclease K6 (150 aa).

A signal peptide spans 1–23 (MVLCFPLLLLLLVLWGPVCLLHA). Residue H38 is the Proton acceptor of the active site. 4 cysteine pairs are disulfide-bonded: C46–C104, C60–C114, C78–C129, and C85–C92. An N-linked (GlcNAc...) asparagine glycan is attached at N55. Residues 61–65 (KHQNT) and K86 each bind substrate. N100 carries N-linked (GlcNAc...) asparagine glycosylation. Residue R105 coordinates substrate. The Proton donor role is filled by H145.

This sequence belongs to the pancreatic ribonuclease family. Interacts (via N-terminus) with bacterial lipopolysaccharide (LPS).

The protein localises to the secreted. Its subcellular location is the lysosome. It is found in the cytoplasmic granule. Ribonuclease which shows a preference for the pyrimidines uridine and cytosine. Has potent antibacterial activity against a range of Gram-positive and Gram-negative bacteria, including P.aeruginosa, A.baumanii, M.luteus, S.aureus, E.faecalis, E.faecium, S.saprophyticus and E.coli. Causes loss of bacterial membrane integrity, and also promotes agglutination of Gram-negative bacteria. Probably contributes to urinary tract sterility. Bactericidal activity is independent of RNase activity. The polypeptide is Ribonuclease K6 (RNASE6) (Miopithecus talapoin (Angolan talapoin)).